The following is a 389-amino-acid chain: Serpin B13 (389 aa).

This sequence belongs to the serpin family. Ov-serpin subfamily.

The protein resides in the cytoplasm. May play a role in the proliferation or differentiation of keratinocytes. The protein is Serpin B13 (Serpinb13) of Mus musculus (Mouse).